Reading from the N-terminus, the 377-residue chain is G-protein coupled receptor 54 (377 aa).

At 1–49 the chain is on the extracellular side; the sequence is MYSSEELWNSTEQVWINGSGTNFSLGRHEDDEEEEGDKHPFFTDAWLVP. 3 N-linked (GlcNAc...) asparagine glycosylation sites follow: N9, N17, and N22. The helical transmembrane segment at 50–70 threads the bilayer; it reads LFFSLIMLVGLVGNSLVIYVI. Topologically, residues 71–91 are cytoplasmic; it reads SKHRQMRTATNFYIANLAATD. Residues 92–112 traverse the membrane as a helical segment; the sequence is IIFLVCCVPFTATLYPLPGWI. The Extracellular segment spans residues 113-119; the sequence is FGNFMCK. Cysteines 118 and 198 form a disulfide. The helical transmembrane segment at 120–140 threads the bilayer; the sequence is FVAFLQQVTVQATCITLTAMS. Residues 141–160 are Cytoplasmic-facing; that stretch reads GDRCYVTVYPLKSLRHRTPK. The chain crosses the membrane as a helical span at residues 161-181; it reads VAMIVSICIWIGSFVLSTPIL. At 182-209 the chain is on the extracellular side; the sequence is MYQRIEEGYWYGPRQYCMERFPSKTHER. A helical membrane pass occupies residues 210–230; that stretch reads AFILYQFIAAYLLPVLTISFC. Topologically, residues 231-269 are cytoplasmic; the sequence is YTLMVKRVGQPTVEPVDNNYQVNLLSERTISIRSKVSKM. A helical transmembrane segment spans residues 270 to 290; that stretch reads VVVIVLLFAICWGPIQIFVLF. Over 291-305 the chain is Extracellular; the sequence is QSFYPNYQPNYATYK. A helical transmembrane segment spans residues 306 to 328; sequence IKTWANCMSYANSSVNPIVYGFM. Residues 329 to 377 are Cytoplasmic-facing; sequence GASFQKSFRKTFPFLFKHKVRDSSMASRTANAEIKFVAAEEGNNNNAVN.

The protein belongs to the G-protein coupled receptor 1 family. Expressed in a significantly high percentage (45-60%) of mature GnRH1, GnRH2, and GnRH3 neurons and in immature GnRH3 neurons, which had migrated to the vicinity of their final locations in the brain. Only 5% of immature GnRH1 and GnRH2 neurons have receptor transcripts.

Its subcellular location is the cell membrane. Its function is as follows. Receptor speculated to be essential for sexual development. May regulate gonadotropin-releasing hormone (GnRH) secretion. The receptor expression could be a 'stop signal' for GnRH1, GnRH2, and GnRH3 neuronal migration, leading to suppression of cell growth and modulation of GnRH secretion, which is important for normal sexual development. This is G-protein coupled receptor 54 (gpr54) from Oreochromis niloticus (Nile tilapia).